We begin with the raw amino-acid sequence, 397 residues long: Vacuolar protein sorting-associated protein 37A (397 aa).

The tract at residues 1-22 is disordered; sequence MSWLFPLTKSASSSAAGSPGGL. Serine 18 carries the phosphoserine modification. The region spanning 308-397 is the VPS37 C-terminal domain; sequence KSTFEKKMQR…AMHSQFHAPL (90 aa).

It belongs to the VPS37 family. In terms of assembly, component of the ESCRT-I complex (endosomal sorting complex required for transport I) which consists of TSG101, VPS28, a VPS37 protein (VPS37A to -D) and MVB12A or MVB12B in a 1:1:1:1 stoichiometry. Interacts with TSG101, VPS28 and HGS. Component of an ESCRT-I complex (endosomal sorting complex required for transport I) which consists of TSG101, VPS28, VPS37A and UBAP1 in a 1:1:1:1 stoichiometry. As to expression, widely expressed. Examined tissues include heart, brain, placenta, liver, skeletal muscle, kidney and pancreas. More abundant in liver. Strongly decreased or undetected in hepatomas.

The protein resides in the late endosome membrane. The protein localises to the nucleus. In terms of biological role, component of the ESCRT-I complex, a regulator of vesicular trafficking process. Required for the sorting of endocytic ubiquitinated cargos into multivesicular bodies. May be involved in cell growth and differentiation. The protein is Vacuolar protein sorting-associated protein 37A (VPS37A) of Homo sapiens (Human).